Consider the following 343-residue polypeptide: Oxygen-dependent coproporphyrinogen-III oxidase (343 aa).

Residue S99 participates in substrate binding. Residues H103 and H113 each coordinate a divalent metal cation. H113 serves as the catalytic Proton donor. A substrate-binding site is contributed by 115 to 117 (NYR). Residues H147 and H177 each coordinate a divalent metal cation. Positions 267 to 302 (YVEFNLVWDRGTIFGLQTNGRTESILMSLPPLARWE) are important for dimerization.

It belongs to the aerobic coproporphyrinogen-III oxidase family. Homodimer. A divalent metal cation serves as cofactor.

Its subcellular location is the cytoplasm. It carries out the reaction coproporphyrinogen III + O2 + 2 H(+) = protoporphyrinogen IX + 2 CO2 + 2 H2O. The protein operates within porphyrin-containing compound metabolism; protoporphyrin-IX biosynthesis; protoporphyrinogen-IX from coproporphyrinogen-III (O2 route): step 1/1. Its function is as follows. Involved in the heme and chlorophyll biosynthesis. Catalyzes the aerobic oxidative decarboxylation of propionate groups of rings A and B of coproporphyrinogen-III to yield the vinyl groups in protoporphyrinogen-IX. This is Oxygen-dependent coproporphyrinogen-III oxidase from Prochlorococcus marinus (strain SARG / CCMP1375 / SS120).